The primary structure comprises 354 residues: Acyl-CoA-binding domain-containing protein 2 (354 aa).

A helical; Signal-anchor transmembrane segment spans residues 11 to 31 (VILGLIFSYLLAKLISIVVTF). The disordered stretch occupies residues 75 to 96 (AEQGSSRSDSVAGDDSEEDDDW). Over residues 86–96 (AGDDSEEDDDW) the composition is skewed to acidic residues. The ACB domain occupies 104 to 194 (LDEAFSAATL…VTQLYPTWLD (91 aa)). An acyl-CoA contacts are provided by residues 136–140 (YGLYK), K162, and Y181. ANK repeat units follow at residues 265–294 (EGRTPLHWAIDRGHLNIAKVLVDKNADVNA) and 298–327 (EGQTPLHYAVVCDREAIAEFLVKQNANTAA).

This sequence belongs to the ACBP family. As to quaternary structure, interacts (via ankyrin repeats) with HIPP26 and the ethylene-responsive element-binding proteins RAP2-3/EBP and RAP2-12. Interacts with CSE. As to expression, mostly expressed in roots and flowers, and, to a lower extent, in stems, pods and leaves (at protein level).

The protein resides in the cell membrane. It localises to the endoplasmic reticulum membrane. It is found in the peroxisome membrane. Binds medium- and long-chain acyl-CoA esters with very high affinity. Can interact in vitro with palmitoyl-CoA, but not with oleoyl-CoA. Binds to lead ions (Pb). May function as an intracellular carrier of acyl-CoA esters. Required for proper phospholipid and, to a lower extent, galactolipid composition. The sequence is that of Acyl-CoA-binding domain-containing protein 2 (ACBP2) from Arabidopsis thaliana (Mouse-ear cress).